Reading from the N-terminus, the 224-residue chain is Prolactin-3D1 (224 aa).

An N-terminal signal peptide occupies residues 1 to 29; sequence MQLTLNLSGSAGMQLLLLVSSLLLWENVS. 2 disulfide bridges follow: Cys-81/Cys-199 and Cys-216/Cys-224. 2 N-linked (GlcNAc...) asparagine glycosylation sites follow: Asn-109 and Asn-158.

It belongs to the somatotropin/prolactin family.

The protein resides in the secreted. The protein is Prolactin-3D1 (Prl3d1) of Mus musculus (Mouse).